The sequence spans 411 residues: 1-deoxy-D-xylulose 5-phosphate reductoisomerase (411 aa).

5 residues coordinate NADPH: T12, G13, S14, I15, and N127. K128 serves as a coordination point for 1-deoxy-D-xylulose 5-phosphate. E129 contacts NADPH. D153 contributes to the Mn(2+) binding site. The 1-deoxy-D-xylulose 5-phosphate site is built by S154, E155, S189, and H212. E155 serves as a coordination point for Mn(2+). G218 is a binding site for NADPH. Residues S225, N230, K231, and E234 each contribute to the 1-deoxy-D-xylulose 5-phosphate site. A Mn(2+)-binding site is contributed by E234.

The protein belongs to the DXR family. Mg(2+) is required as a cofactor. The cofactor is Mn(2+).

It catalyses the reaction 2-C-methyl-D-erythritol 4-phosphate + NADP(+) = 1-deoxy-D-xylulose 5-phosphate + NADPH + H(+). The protein operates within isoprenoid biosynthesis; isopentenyl diphosphate biosynthesis via DXP pathway; isopentenyl diphosphate from 1-deoxy-D-xylulose 5-phosphate: step 1/6. Its function is as follows. Catalyzes the NADPH-dependent rearrangement and reduction of 1-deoxy-D-xylulose-5-phosphate (DXP) to 2-C-methyl-D-erythritol 4-phosphate (MEP). The sequence is that of 1-deoxy-D-xylulose 5-phosphate reductoisomerase from Colwellia psychrerythraea (strain 34H / ATCC BAA-681) (Vibrio psychroerythus).